A 336-amino-acid polypeptide reads, in one-letter code: MSKNDISAYMSEWMRDREESPIVMSSRIRLARNLENHVHPLMFLSEQDGFRIINEVQDALPDLAVQRLDAMDQQSKYKLVAKHLISPELIRQPASAVLLNEDESLSIMVNEEDHLRIQAMGNDLSLSSLYEKASEIDDKLDSELDVSFDETLGYLTTCPTNIGTGMRASVMLHLPGLTIMKRMNRIAQTINRFGFTIRGIYGEGSHVYGHIYQISNQLTLGKTEEDIIESLSEVVQQIINEEMQIRERLNRHNYTETLDRVYRSLGILKYSRLISMEEASLRLSEVKLGIDLEYIELEDFKFNELMVAIQSPFLLDDEDDRTVNEKRADILREHIN.

Residues Ile-22 to Ile-245 form the Phosphagen kinase C-terminal domain. ATP is bound by residues Ser-25–Arg-29, His-83, Arg-116, Arg-167–Met-171, and Arg-198–Glu-203.

It belongs to the ATP:guanido phosphotransferase family.

It catalyses the reaction L-arginyl-[protein] + ATP = N(omega)-phospho-L-arginyl-[protein] + ADP + H(+). Its function is as follows. Catalyzes the specific phosphorylation of arginine residues in proteins. This chain is Protein-arginine kinase, found in Staphylococcus saprophyticus subsp. saprophyticus (strain ATCC 15305 / DSM 20229 / NCIMB 8711 / NCTC 7292 / S-41).